Here is a 576-residue protein sequence, read N- to C-terminus: 2-succinyl-5-enolpyruvyl-6-hydroxy-3-cyclohexene-1-carboxylate synthase (576 aa).

The protein belongs to the TPP enzyme family. MenD subfamily. In terms of assembly, homodimer. Mg(2+) is required as a cofactor. Mn(2+) serves as cofactor. Requires thiamine diphosphate as cofactor.

The enzyme catalyses isochorismate + 2-oxoglutarate + H(+) = 5-enolpyruvoyl-6-hydroxy-2-succinyl-cyclohex-3-ene-1-carboxylate + CO2. It participates in quinol/quinone metabolism; 1,4-dihydroxy-2-naphthoate biosynthesis; 1,4-dihydroxy-2-naphthoate from chorismate: step 2/7. Its pathway is quinol/quinone metabolism; menaquinone biosynthesis. Catalyzes the thiamine diphosphate-dependent decarboxylation of 2-oxoglutarate and the subsequent addition of the resulting succinic semialdehyde-thiamine pyrophosphate anion to isochorismate to yield 2-succinyl-5-enolpyruvyl-6-hydroxy-3-cyclohexene-1-carboxylate (SEPHCHC). In Photobacterium profundum (strain SS9), this protein is 2-succinyl-5-enolpyruvyl-6-hydroxy-3-cyclohexene-1-carboxylate synthase.